The following is a 66-amino-acid chain: ATP synthase protein 8 (66 aa).

The chain crosses the membrane as a helical span at residues 8–24 (TWLMMIMSMFLALFIIF). An N6-acetyllysine; alternate modification is found at Lys-54. Residue Lys-54 is modified to N6-succinyllysine; alternate. Lys-57 bears the N6-acetyllysine mark.

This sequence belongs to the ATPase protein 8 family. In terms of assembly, F-type ATPases have 2 components, CF(1) - the catalytic core - and CF(0) - the membrane proton channel. Component of an ATP synthase complex composed of ATP5PB, ATP5MC1, ATP5F1E, ATP5PD, ATP5ME, ATP5PF, ATP5MF, MT-ATP6, MT-ATP8, ATP5F1A, ATP5F1B, ATP5F1D, ATP5F1C, ATP5PO, ATP5MG, ATP5MK and ATP5MJ. Interacts with PRICKLE3.

The protein resides in the mitochondrion membrane. Mitochondrial membrane ATP synthase (F(1)F(0) ATP synthase or Complex V) produces ATP from ADP in the presence of a proton gradient across the membrane which is generated by electron transport complexes of the respiratory chain. F-type ATPases consist of two structural domains, F(1) - containing the extramembraneous catalytic core and F(0) - containing the membrane proton channel, linked together by a central stalk and a peripheral stalk. During catalysis, ATP synthesis in the catalytic domain of F(1) is coupled via a rotary mechanism of the central stalk subunits to proton translocation. Part of the complex F(0) domain. Minor subunit located with subunit a in the membrane. The sequence is that of ATP synthase protein 8 (MT-ATP8) from Cervus elaphus hippelaphus (European red deer).